Reading from the N-terminus, the 340-residue chain is DNA-directed RNA polymerase subunit alpha (340 aa).

The alpha N-terminal domain (alpha-NTD) stretch occupies residues 1 to 236 (MSVIQKNWQE…DQLQLFINFE (236 aa)). Residues 252-340 (FNKNLLRKVD…DLAKKLEEPY (89 aa)) are alpha C-terminal domain (alpha-CTD).

Belongs to the RNA polymerase alpha chain family. Homodimer. The RNAP catalytic core consists of 2 alpha, 1 beta, 1 beta' and 1 omega subunit. When a sigma factor is associated with the core the holoenzyme is formed, which can initiate transcription.

It carries out the reaction RNA(n) + a ribonucleoside 5'-triphosphate = RNA(n+1) + diphosphate. Functionally, DNA-dependent RNA polymerase catalyzes the transcription of DNA into RNA using the four ribonucleoside triphosphates as substrates. This Rhodospirillum rubrum (strain ATCC 11170 / ATH 1.1.1 / DSM 467 / LMG 4362 / NCIMB 8255 / S1) protein is DNA-directed RNA polymerase subunit alpha.